A 118-amino-acid polypeptide reads, in one-letter code: MKHLWFFLLLVAAPRWVLSQLQLQESGSGLVKPSQTLSLTCAVSGGSISSGGYSWSWIRQPPGKGLEWIGYIYHSGSTYYNPSLKSRVTISVDRSKNQFSLKLSSVTAADTAVYYCAR.

A signal peptide spans 1–19 (MKHLWFFLLLVAAPRWVLS). Residues 20-44 (QLQLQESGSGLVKPSQTLSLTCAVS) form a framework-1 region. The Ig-like domain occupies 20 to 118 (QLQLQESGSG…ADTAVYYCAR (99 aa)). Cysteine 41 and cysteine 116 are joined by a disulfide. A complementarity-determining-1 region spans residues 45–54 (GGSISSGGYS). Residues 55 to 71 (WSWIRQPPGKGLEWIGY) form a framework-2 region. Positions 72-78 (IYHSGST) are complementarity-determining-2. Residues 79-116 (YYNPSLKSRVTISVDRSKNQFSLKLSSVTAADTAVYYC) are framework-3. The segment at 117 to 118 (AR) is complementarity-determining-3.

Immunoglobulins are composed of two identical heavy chains and two identical light chains; disulfide-linked.

The protein resides in the secreted. It localises to the cell membrane. V region of the variable domain of immunoglobulin heavy chains that participates in the antigen recognition. Immunoglobulins, also known as antibodies, are membrane-bound or secreted glycoproteins produced by B lymphocytes. In the recognition phase of humoral immunity, the membrane-bound immunoglobulins serve as receptors which, upon binding of a specific antigen, trigger the clonal expansion and differentiation of B lymphocytes into immunoglobulins-secreting plasma cells. Secreted immunoglobulins mediate the effector phase of humoral immunity, which results in the elimination of bound antigens. The antigen binding site is formed by the variable domain of one heavy chain, together with that of its associated light chain. Thus, each immunoglobulin has two antigen binding sites with remarkable affinity for a particular antigen. The variable domains are assembled by a process called V-(D)-J rearrangement and can then be subjected to somatic hypermutations which, after exposure to antigen and selection, allow affinity maturation for a particular antigen. This chain is Immunoglobulin heavy variable 4-30-2, found in Homo sapiens (Human).